A 788-amino-acid chain; its full sequence is Integrin beta-3 (788 aa).

A signal peptide spans 1-26 (MRARPRPRPLWATVLALGALAGVGVG). Residues 27-718 (GPNICTTRGV…EEPECPKGPD (692 aa)) lie on the Extracellular side of the membrane. In terms of domain architecture, PSI spans 30 to 76 (ICTTRGVSSCQQCLAVSPMCAWCSDEALPLGSPRCDLKENLLKDNCA). Intrachain disulfides connect Cys-31-Cys-49, Cys-39-Cys-461, Cys-42-Cys-64, Cys-52-Cys-75, Cys-203-Cys-210, Cys-258-Cys-299, Cys-400-Cys-412, Cys-432-Cys-459, Cys-463-Cys-483, Cys-474-Cys-486, Cys-488-Cys-497, Cys-499-Cys-529, Cys-512-Cys-527, Cys-521-Cys-532, Cys-534-Cys-547, Cys-549-Cys-570, Cys-554-Cys-568, Cys-562-Cys-573, and Cys-575-Cys-584. A glycan (N-linked (GlcNAc...) asparagine) is linked at Asn-125. In terms of domain architecture, VWFA spans 135-377 (DYPVDIYYLM…QLIVDAYGKI (243 aa)). Mg(2+) is bound by residues Ser-147 and Ser-149. Ca(2+) contacts are provided by Ser-149, Asp-152, Asp-153, and Asp-184. The interval 203 to 210 (CYDMKTTC) is involved in CX3CL1-, NRG1-, FGF1- and IGF1-binding. 5 residues coordinate Ca(2+): Asn-241, Asp-243, Pro-245, Glu-246, and Asp-277. Glu-246 is a binding site for Mg(2+). The tract at residues 293 to 313 (QPNDGQCHVGSDNHYSASTTM) is CX3CL1-binding. Asn-346 is a glycosylation site (N-linked (GlcNAc...) asparagine). Met-361 is a Ca(2+) binding site. N-linked (GlcNAc...) asparagine glycosylation is present at Asn-397. I-EGF domains follow at residues 463–498 (CQAQ…SQCE), 499–548 (CSEE…KYCE), 549–585 (CDDF…YYCN), and 586–625 (CTTR…DTCE). An N-linked (GlcNAc...) asparagine glycan is attached at Asn-478. N-linked (GlcNAc...) asparagine glycosylation occurs at Asn-585. 9 disulfides stabilise this stretch: Cys-586-Cys-609, Cys-593-Cys-607, Cys-601-Cys-612, Cys-614-Cys-624, Cys-627-Cys-630, Cys-634-Cys-681, Cys-640-Cys-661, Cys-643-Cys-657, and Cys-689-Cys-713. Asn-680 is a glycosylation site (N-linked (GlcNAc...) asparagine). A helical transmembrane segment spans residues 719-741 (ILVVLLSVMGAILLIGLAALLIW). Residues 742-788 (KLLITIHDRKEFAKFEEERARAKWDTANNPLYKEATSTFTNITYRGT) lie on the Cytoplasmic side of the membrane. Thr-767 bears the Phosphothreonine mark. At Tyr-773 the chain carries Phosphotyrosine. The short motif at 777–783 (TSTFTNI) is the LIR element. At Thr-779 the chain carries Phosphothreonine; by PDPK1 and PKB/AKT1; in vitro. Tyr-785 is modified (phosphotyrosine).

This sequence belongs to the integrin beta chain family. In terms of assembly, heterodimer of an alpha and a beta subunit. Beta-3 (ITGB3) associates with either alpha-IIb (ITGA2B) or alpha-V (ITGAV). Isoform Beta-3C interacts with FLNB. Interacts with COMP. Interacts with PDIA6 following platelet stimulation. Interacts with SYK; upon activation by ITGB3 promotes platelet adhesion. Interacts with MYO10. Interacts with DAB2. Interacts with FERMT2. Interacts with EMP2; regulates the levels of the heterodimer ITGA5:ITGB3 integrin expression on the plasma membrane. Integrin ITGAV:ITGB3 interacts with FBLN5 (via N-terminus). ITGAV:ITGB3 interacts with CCN3. ITGAV:ITGB3 and ITGA2B:ITGB3 interact with SELP (via C-type lectin domain); the interaction mediates cell-cell interaction and adhesion. ITGAV:ITGB3 is found in a ternary complex with CX3CR1 and CX3CL1. ITGAV:ITGB3 is found in a ternary complex with NRG1 and ERBB3. ITGAV:ITGB3 is found in a ternary complex with FGF1 and FGFR1. ITGAV:ITGB3 interacts with FGF2; it is likely that FGF2 can simultaneously bind ITGAV:ITGB3 and FGF receptors. ITGAV:ITGB3 binds to IL1B. ITGAV:ITGB3 is found in a ternary complex with IGF1 and IGF1R. ITGAV:ITGB3 interacts with IGF2. ITGAV:ITGB3 interacts with FBN1. ITGAV:ITGB3 interacts with CD9, CD81 and CD151 (via second extracellular domain). Interacts (via the allosteric site (site 2)) with CXCL12 in a CXCR4-independent manner. Interacts with MXRA8/DICAM; the interaction inhibits ITGAV:ITGB3 heterodimer formation. ITGAV:ITGB3 interacts with PTN. Forms a complex with PTPRZ1 and PTN that stimulates endothelial cell migration through ITGB3 Tyr-773 phosphorylation. ITGAV:ITGB3 interacts with SLC6A4. Interacts with SLC6A4 (via C-terminus); this interaction regulates SLC6A4 trafficking. ITGA2B:ITGB3 interacts with PPIA/CYPA; the interaction is ROS and PPIase activity-dependent and is increased in the presence of thrombin. Interacts with tensin TNS3; TNS3 also interacts with PEAK1, thus acting as an adapter molecule to bridge the association of PEAK1 with ITGB3. Interacts with TM4SF19. As to quaternary structure, (Microbial infection) Integrin ITGAV:ITGB3 interacts with herpes virus 8/HHV-8 glycoprotein B. (Microbial infection) Integrin ITGAV:ITGB3 interacts with coxsackievirus A9 capsid proteins. In terms of assembly, (Microbial infection) Interacts with Hantaan virus glycoprotein G. As to quaternary structure, (Microbial infection) Integrin ITGAV:ITGB3 interacts with cytomegalovirus/HHV-5 gH:gL proteins. (Microbial infection) Integrin ITGA5:ITGB3 interacts with human metapneumovirus fusion protein. In terms of assembly, (Microbial infection) Integrin ITGAV:ITGB3 interacts with human parechovirus 1 capsid proteins. As to quaternary structure, (Microbial infection) Integrin ITGAV:ITGB3 interacts with west nile virus envelope protein E. (Microbial infection) Interacts with HIV-1 Tat. ITGAV:ITGB3 interacts with AGRA2. Phosphorylated on tyrosine residues in response to thrombin-induced platelet aggregation. Probably involved in outside-in signaling. A peptide (AA 740-762) is capable of binding GRB2 only when both Tyr-773 and Tyr-785 are phosphorylated. Phosphorylation of Thr-779 inhibits SHC binding. In terms of tissue distribution, isoform beta-3A and isoform beta-3C are widely expressed. Isoform beta-3A is specifically expressed in osteoblast cells; isoform beta-3C is specifically expressed in prostate and testis.

Its subcellular location is the cell membrane. The protein resides in the cell projection. The protein localises to the lamellipodium membrane. It is found in the cell junction. It localises to the focal adhesion. Its subcellular location is the postsynaptic cell membrane. The protein resides in the synapse. Its function is as follows. Integrin alpha-V/beta-3 (ITGAV:ITGB3) is a receptor for cytotactin, fibronectin, laminin, matrix metalloproteinase-2, osteopontin, osteomodulin, prothrombin, thrombospondin, vitronectin and von Willebrand factor. Integrin alpha-IIb/beta-3 (ITGA2B:ITGB3) is a receptor for fibronectin, fibrinogen, plasminogen, prothrombin, thrombospondin and vitronectin. Integrins alpha-IIb/beta-3 and alpha-V/beta-3 recognize the sequence R-G-D in a wide array of ligands. Integrin alpha-IIb/beta-3 recognizes the sequence H-H-L-G-G-G-A-K-Q-A-G-D-V in fibrinogen gamma chain. Following activation integrin alpha-IIb/beta-3 brings about platelet/platelet interaction through binding of soluble fibrinogen. This step leads to rapid platelet aggregation which physically plugs ruptured endothelial surface. Fibrinogen binding enhances SELP expression in activated platelets. ITGAV:ITGB3 binds to fractalkine (CX3CL1) and acts as its coreceptor in CX3CR1-dependent fractalkine signaling. ITGAV:ITGB3 binds to NRG1 (via EGF domain) and this binding is essential for NRG1-ERBB signaling. ITGAV:ITGB3 binds to FGF1 and this binding is essential for FGF1 signaling. ITGAV:ITGB3 binds to FGF2 and this binding is essential for FGF2 signaling. ITGAV:ITGB3 binds to IGF1 and this binding is essential for IGF1 signaling. ITGAV:ITGB3 binds to IGF2 and this binding is essential for IGF2 signaling. ITGAV:ITGB3 binds to IL1B and this binding is essential for IL1B signaling. ITGAV:ITGB3 binds to PLA2G2A via a site (site 2) which is distinct from the classical ligand-binding site (site 1) and this induces integrin conformational changes and enhanced ligand binding to site 1. ITGAV:ITGB3 acts as a receptor for fibrillin-1 (FBN1) and mediates R-G-D-dependent cell adhesion to FBN1. In brain, plays a role in synaptic transmission and plasticity. Involved in the regulation of the serotonin neurotransmission, is required to localize to specific compartments within the synapse the serotonin receptor SLC6A4 and for an appropriate reuptake of serotonin. Controls excitatory synaptic strength by regulating GRIA2-containing AMPAR endocytosis, which affects AMPAR abundance and composition. ITGAV:ITGB3 act as a receptor for CD40LG. ITGAV:ITGB3 acts as a receptor for IBSP and promotes cell adhesion and migration to IBSP. Functionally, (Microbial infection) Integrin ITGAV:ITGB3 acts as a receptor for Herpes virus 8/HHV-8. In terms of biological role, (Microbial infection) Integrin ITGAV:ITGB3 acts as a receptor for Coxsackievirus A9. (Microbial infection) Acts as a receptor for Hantaan virus. Its function is as follows. (Microbial infection) Integrin ITGAV:ITGB3 acts as a receptor for Cytomegalovirus/HHV-5. Functionally, (Microbial infection) Integrin ITGA5:ITGB3 acts as a receptor for Human metapneumovirus. In terms of biological role, (Microbial infection) Integrin ITGAV:ITGB3 acts aP05556s a receptor for Human parechovirus 1. (Microbial infection) Integrin ITGAV:ITGB3 acts as a receptor for West nile virus. Its function is as follows. (Microbial infection) In case of HIV-1 infection, the interaction with extracellular viral Tat protein seems to enhance angiogenesis in Kaposi's sarcoma lesions. In Homo sapiens (Human), this protein is Integrin beta-3.